A 363-amino-acid polypeptide reads, in one-letter code: Teichoic acids export ATP-binding protein TagH (363 aa).

The ABC transporter domain maps to K27–A246. ATP is bound at residue G60–S67. Positions Q247–K363 are unknown.

It belongs to the ABC transporter superfamily. Teichoic acids exporter (TC 3.A.1.104.1) family. As to quaternary structure, the complex is composed of two ATP-binding proteins (TagH) and two transmembrane proteins (TagG).

It localises to the cell membrane. The catalysed reaction is ATP + H2O + teichoic acidSide 1 = ADP + phosphate + teichoic acidSide 2.. Functionally, part of the ABC transporter complex TagGH involved in teichoic acids export. Responsible for energy coupling to the transport system. The polypeptide is Teichoic acids export ATP-binding protein TagH (Lactiplantibacillus plantarum (strain ATCC BAA-793 / NCIMB 8826 / WCFS1) (Lactobacillus plantarum)).